The primary structure comprises 708 residues: Vertnin (708 aa).

Disordered regions lie at residues 473 to 499 (PWKG…FLPP) and 561 to 636 (APAL…PVAE). The span at 568-582 (GLREAKEKQEKEAGR) shows a compositional bias: basic and acidic residues.

The protein belongs to the vertnin family.

The protein is Vertnin (VRTN) of Ailuropoda melanoleuca (Giant panda).